Reading from the N-terminus, the 198-residue chain is Peroxiredoxin-2 (198 aa).

A2 carries the N-acetylalanine modification. Positions 6-164 (AHIGKPAPDF…ALRLVQAFQY (159 aa)) constitute a Thioredoxin domain. C51 serves as the catalytic Cysteine sulfenic acid (-SOH) intermediate. S112 bears the Phosphoserine mark. Residue T182 is modified to Phosphothreonine. N6-acetyllysine is present on K196.

It belongs to the peroxiredoxin family. AhpC/Prx1 subfamily. In terms of assembly, homodimer; disulfide-linked, upon oxidation. 5 homodimers assemble to form a ring-like decamer. Interacts with TIPIN. The enzyme can be inactivated by further oxidation of the cysteine sulfenic acid (C(P)-SOH) to sulphinic acid (C(P)-SO2H) instead of its condensation to a disulfide bond. It can be reactivated by forming a transient disulfide bond with sulfiredoxin SRXN1, which reduces the cysteine sulfinic acid in an ATP- and Mg-dependent manner. Post-translationally, acetylation increases resistance to transition to high molecular-mass complexes. Deacetylated by HDAC6 which decreases reducing activity.

The protein localises to the cytoplasm. It catalyses the reaction a hydroperoxide + [thioredoxin]-dithiol = an alcohol + [thioredoxin]-disulfide + H2O. Its function is as follows. Thiol-specific peroxidase that catalyzes the reduction of hydrogen peroxide and organic hydroperoxides to water and alcohols, respectively. Plays a role in cell protection against oxidative stress by detoxifying peroxides and as sensor of hydrogen peroxide-mediated signaling events. Might participate in the signaling cascades of growth factors and tumor necrosis factor-alpha by regulating the intracellular concentrations of H(2)O(2). This Rattus norvegicus (Rat) protein is Peroxiredoxin-2 (Prdx2).